Here is a 226-residue protein sequence, read N- to C-terminus: Putative ankyrin repeat protein RF_0939 (226 aa).

ANK repeat units lie at residues 56-86 (VSTT…NVNM), 91-120 (FKDT…AVNG), 125-154 (LLGP…AVDQ), and 157-194 (SGET…DTNA).

The sequence is that of Putative ankyrin repeat protein RF_0939 from Rickettsia felis (strain ATCC VR-1525 / URRWXCal2) (Rickettsia azadi).